Here is a 140-residue protein sequence, read N- to C-terminus: Ribosome maturation factor RimP (140 aa).

Belongs to the RimP family.

It localises to the cytoplasm. Functionally, required for maturation of 30S ribosomal subunits. This chain is Ribosome maturation factor RimP, found in Campylobacter jejuni subsp. doylei (strain ATCC BAA-1458 / RM4099 / 269.97).